The chain runs to 162 residues: Cytochrome c-type biogenesis protein CcmE (162 aa).

Over 1 to 8 the chain is Cytoplasmic; that stretch reads MNPRRKKR. Residues 9-29 form a helical; Signal-anchor for type II membrane protein membrane-spanning segment; the sequence is LTLAVALIGGVAAITSLLLYA. Residues 30 to 162 are Periplasmic-facing; it reads LNSNLNLFYT…YSQQKAPDTK (133 aa). Residues H131 and Y135 each contribute to the heme site. The segment at 142–162 is disordered; sequence EAMGQKHEKLDYSQQKAPDTK. The segment covering 153–162 has biased composition (polar residues); the sequence is YSQQKAPDTK.

It belongs to the CcmE/CycJ family.

It is found in the cell inner membrane. Functionally, heme chaperone required for the biogenesis of c-type cytochromes. Transiently binds heme delivered by CcmC and transfers the heme to apo-cytochromes in a process facilitated by CcmF and CcmH. The sequence is that of Cytochrome c-type biogenesis protein CcmE from Shewanella baltica (strain OS223).